The chain runs to 615 residues: Forkhead box protein O (615 aa).

5 disordered regions span residues 39-77 (RARS…DSQQ), 182-205 (KSVR…RAKK), 217-269 (GLND…RLSP), 318-359 (FSAA…APGY), and 389-409 (NSVT…SDSL). Residue Thr44 is modified to Phosphothreonine; by PKB/AKT1. Residues 63–77 (TKASNQQLAPGDSQQ) show a composition bias toward polar residues. Phosphoserine is present on Ser75. Residues 95–201 (WGNLSYADLI…ETSRYEKRRG (107 aa)) constitute a DNA-binding region (fork-head). Ser190 is subject to Phosphoserine; by PKB/AKT1. Composition is skewed to polar residues over residues 221 to 230 (ATPSPSSSVS) and 256 to 265 (RASSNASSCG). Ser259 carries the post-translational modification Phosphoserine; by PKB/AKT1. Residues Ser262, Ser263, and Ser268 each carry the phosphoserine modification. Pro residues predominate over residues 326-335 (SQPPPPPYQP). Low complexity predominate over residues 336–351 (PQHQQAQQQQQQSPYA).

Interacts with melt.

Its subcellular location is the cytoplasm. The protein resides in the nucleus. In terms of biological role, transcription factor involved in the regulation of the insulin signaling pathway. Consistently activates both the downstream target Thor\d4EBP and the feedback control target InR. Involved in negative regulation of the cell cycle, modulating cell growth and proliferation. In response to cellular stresses, such as nutrient deprivation or increased levels of reactive oxygen species, foxo is activated and inhibits growth through the action of target genes such as Thor. Foxo activated in the adult fat body can regulate lifespan in adults; an insulin peptide itself may function as one secondary messenger of insulin-regulated aging. Also regulates Lip4, homolog of human acid lipases, thereby acting as a key modulator of lipid metabolism by insulin signaling and integrates insulin responses to glucose and lipid homeostasis. The sequence is that of Forkhead box protein O from Drosophila erecta (Fruit fly).